The chain runs to 139 residues: Large ribosomal subunit protein uL13c (139 aa).

It belongs to the universal ribosomal protein uL13 family. Part of the 50S ribosomal subunit.

Its subcellular location is the plastid. The protein localises to the chloroplast. This is Large ribosomal subunit protein uL13c from Trieres chinensis (Marine centric diatom).